Consider the following 199-residue polypeptide: Peroxiredoxin-1 (199 aa).

Position 2 is an N-acetylserine (Ser-2). One can recognise a Thioredoxin domain in the interval 6–165; the sequence is AKIGHRAPQF…TLRLVQAFQF (160 aa). The residue at position 7 (Lys-7) is an N6-acetyllysine; alternate. A Glycyl lysine isopeptide (Lys-Gly) (interchain with G-Cter in SUMO2); alternate cross-link involves residue Lys-7. N6-acetyllysine is present on residues Lys-16 and Lys-27. Lys-35 carries the N6-acetyllysine; alternate modification. Lys-35 is modified (N6-succinyllysine; alternate). Cys-52 acts as the Cysteine sulfenic acid (-SOH) intermediate in catalysis. Thr-90 carries the post-translational modification Phosphothreonine. Lys-120 participates in a covalent cross-link: Glycyl lysine isopeptide (Lys-Gly) (interchain with G-Cter in SUMO2). N6-acetyllysine is present on Lys-136. Residues 176–199 form a disordered region; that stretch reads GWKPGSDTIKPDVQKSKEYFSKQK. Residues 184–199 show a composition bias toward basic and acidic residues; that stretch reads IKPDVQKSKEYFSKQK. Lys-185 participates in a covalent cross-link: Glycyl lysine isopeptide (Lys-Gly) (interchain with G-Cter in SUMO1). An N6-acetyllysine modification is found at Lys-197.

The protein belongs to the peroxiredoxin family. AhpC/Prx1 subfamily. As to quaternary structure, homodimer; disulfide-linked, upon oxidation. 5 homodimers assemble to form a ring-like decamer. Interacts with GDPD5; forms a mixed-disulfide with GDPD5. Interacts with SESN1 and SESN2. Interacts with FAM107A. Post-translationally, phosphorylated on Thr-90 during the M-phase, which leads to a decrease in enzymatic activity. Acetylation increases reducing activity and resistance to superoxidation. Deacetylated by HDAC6 which decreases reducing activity.

The protein localises to the cytoplasm. It catalyses the reaction a hydroperoxide + [thioredoxin]-dithiol = an alcohol + [thioredoxin]-disulfide + H2O. Its function is as follows. Thiol-specific peroxidase that catalyzes the reduction of hydrogen peroxide and organic hydroperoxides to water and alcohols, respectively. Plays a role in cell protection against oxidative stress by detoxifying peroxides and as sensor of hydrogen peroxide-mediated signaling events. Might participate in the signaling cascades of growth factors and tumor necrosis factor-alpha by regulating the intracellular concentrations of H(2)O(2). Reduces an intramolecular disulfide bond in GDPD5 that gates the ability to GDPD5 to drive postmitotic motor neuron differentiation. This chain is Peroxiredoxin-1 (PRDX1), found in Bos taurus (Bovine).